The following is a 408-amino-acid chain: Imidazolonepropionase (408 aa).

Positions 73 and 75 each coordinate Fe(3+). The Zn(2+) site is built by H73 and H75. 3 residues coordinate 4-imidazolone-5-propanoate: R82, Y145, and H178. Y145 serves as a coordination point for N-formimidoyl-L-glutamate. Residue H243 coordinates Fe(3+). H243 provides a ligand contact to Zn(2+). Q246 contacts 4-imidazolone-5-propanoate. Residue D318 participates in Fe(3+) binding. Position 318 (D318) interacts with Zn(2+). Residues N320 and G322 each coordinate N-formimidoyl-L-glutamate. Residue S323 participates in 4-imidazolone-5-propanoate binding.

Belongs to the metallo-dependent hydrolases superfamily. HutI family. It depends on Zn(2+) as a cofactor. Fe(3+) serves as cofactor.

The protein resides in the cytoplasm. It catalyses the reaction 4-imidazolone-5-propanoate + H2O = N-formimidoyl-L-glutamate. It participates in amino-acid degradation; L-histidine degradation into L-glutamate; N-formimidoyl-L-glutamate from L-histidine: step 3/3. Its function is as follows. Catalyzes the hydrolytic cleavage of the carbon-nitrogen bond in imidazolone-5-propanoate to yield N-formimidoyl-L-glutamate. It is the third step in the universal histidine degradation pathway. The protein is Imidazolonepropionase of Shewanella sp. (strain W3-18-1).